Reading from the N-terminus, the 559-residue chain is MGICSSTCCGGRARDGLYEPVLADSEREAVADLLQYLENRGETDFFSGEPLRALSTLVFSENIDLQRSASLTFAEITERDVREVDRDTLEPILFLLQSPDIEVQRAASAALGNLAVDTENKVLIVQLGGLTPLIRQMMSPNVEVQCNAVGCITNLATHEENKAKIARSGALGPLTRLAKSRDMRVQRNATGALLNMTHSDENRQQLVNAGAIPVLVQLLSSPDVDVQYYCTTALSNIAVDASNRRKLAQSEPKLVQSLVNLMDSTSPKVQCQAALALRNLASDEKYQLDIVRANGLHPLLRLLQSSYLPLILSAVACIRNISIHPMNESPIIETNFLKPLVDLLGSTDNEEIQCHAISTLRNLAASSDRNKALVLDAGAVQKCKQLVLDVPITVQSEMTAAIAVLALSDDLKSHLLNLGVCGVLIPLTHSPSIEVQGNSAAALGNLSSKVGDYSIFVQNWTEPQGGIHGYLCRFLQSGDATFQHIAVWTLLQLFESEDKTLIGLIGKAEDIIEHIRSIANRQIEPDNEFEDEDEGEVVNLAQRCLELLGQSMSKAHIEG.

G2 is lipidated: N-myristoyl glycine. The S-palmitoyl cysteine moiety is linked to residue C4. ARM repeat units lie at residues 77-116 (TERD…NLAV), 118-157 (TENK…NLAT), 159-198 (EENK…NMTH), 200-239 (DENR…NIAV), 243-282 (NRRK…NLAS), 284-323 (EKYQ…NISI), 325-365 (PMNE…NLAA), and 409-448 (DDLK…NLSS).

The protein belongs to the beta-catenin family.

The protein localises to the vacuole membrane. Its function is as follows. Functions in both vacuole inheritance and protein targeting from the cytoplasm to vacuole. In Gibberella zeae (strain ATCC MYA-4620 / CBS 123657 / FGSC 9075 / NRRL 31084 / PH-1) (Wheat head blight fungus), this protein is Vacuolar protein 8 (VAC8).